The primary structure comprises 692 residues: Glycine--tRNA ligase beta subunit (692 aa).

It belongs to the class-II aminoacyl-tRNA synthetase family. As to quaternary structure, tetramer of two alpha and two beta subunits.

The protein localises to the cytoplasm. The catalysed reaction is tRNA(Gly) + glycine + ATP = glycyl-tRNA(Gly) + AMP + diphosphate. This Oceanobacillus iheyensis (strain DSM 14371 / CIP 107618 / JCM 11309 / KCTC 3954 / HTE831) protein is Glycine--tRNA ligase beta subunit.